We begin with the raw amino-acid sequence, 505 residues long: Deoxyguanosinetriphosphate triphosphohydrolase (505 aa).

The region spanning 66-273 is the HD domain; sequence RLTHSMEVQQ…MEAADDISYC (208 aa).

It belongs to the dGTPase family. Type 1 subfamily. Homotetramer. It depends on Mg(2+) as a cofactor.

The catalysed reaction is dGTP + H2O = 2'-deoxyguanosine + triphosphate + H(+). Functionally, dGTPase preferentially hydrolyzes dGTP over the other canonical NTPs. This chain is Deoxyguanosinetriphosphate triphosphohydrolase, found in Escherichia coli (strain K12 / MC4100 / BW2952).